The sequence spans 311 residues: Aspartate carbamoyltransferase catalytic subunit (311 aa).

Carbamoyl phosphate contacts are provided by arginine 59 and threonine 60. Lysine 87 is an L-aspartate binding site. Residues arginine 109, histidine 139, and glutamine 142 each contribute to the carbamoyl phosphate site. L-aspartate-binding residues include arginine 172 and arginine 224. The carbamoyl phosphate site is built by alanine 265 and proline 266.

Belongs to the aspartate/ornithine carbamoyltransferase superfamily. ATCase family. Heterododecamer (2C3:3R2) of six catalytic PyrB chains organized as two trimers (C3), and six regulatory PyrI chains organized as three dimers (R2).

It carries out the reaction carbamoyl phosphate + L-aspartate = N-carbamoyl-L-aspartate + phosphate + H(+). The protein operates within pyrimidine metabolism; UMP biosynthesis via de novo pathway; (S)-dihydroorotate from bicarbonate: step 2/3. Catalyzes the condensation of carbamoyl phosphate and aspartate to form carbamoyl aspartate and inorganic phosphate, the committed step in the de novo pyrimidine nucleotide biosynthesis pathway. This is Aspartate carbamoyltransferase catalytic subunit from Streptococcus equi subsp. equi (strain 4047).